The sequence spans 351 residues: Methylxanthine N1-demethylase NdmA (351 aa).

The region spanning 17–125 is the Rieske domain; it reads WHPVCTVTEL…CEERYGLIWI (109 aa). [2Fe-2S] cluster is bound by residues Cys62, His64, Cys81, and His84.

[2Fe-2S] cluster is required as a cofactor.

It catalyses the reaction caffeine + NADH + O2 + H(+) = theobromine + formaldehyde + NAD(+) + H2O. The catalysed reaction is caffeine + NADPH + O2 + H(+) = theobromine + formaldehyde + NADP(+) + H2O. The enzyme catalyses theophylline + NADH + O2 + H(+) = 3-methylxanthine + formaldehyde + NAD(+) + H2O. It carries out the reaction theophylline + NADPH + O2 + H(+) = 3-methylxanthine + formaldehyde + NADP(+) + H2O. It catalyses the reaction 1,7-dimethylxanthine + NADH + O2 + H(+) = 7-methylxanthine + formaldehyde + NAD(+) + H2O. The catalysed reaction is 1,7-dimethylxanthine + NADPH + O2 + H(+) = 7-methylxanthine + formaldehyde + NADP(+) + H2O. Its pathway is alkaloid degradation. Involved in the caffeine degradation, which is the essential first step for assimilating the carbon and nitrogen in caffeine. Catalyzes the N1-demethylation of caffeine to produce theobromine and formaldehyde. Also catalyzes the N1-demethylation of theophylline, paraxanthine, and 1-methylxanthine to 3-methylxanthine, 7-methylxanthine, and xanthine, respectively. NADH is the preferred substrate. This chain is Methylxanthine N1-demethylase NdmA (ndmA), found in Pseudomonas putida (Arthrobacter siderocapsulatus).